Consider the following 134-residue polypeptide: ATP synthase epsilon chain, chloroplastic (134 aa).

The protein belongs to the ATPase epsilon chain family. As to quaternary structure, F-type ATPases have 2 components, CF(1) - the catalytic core - and CF(0) - the membrane proton channel. CF(1) has five subunits: alpha(3), beta(3), gamma(1), delta(1), epsilon(1). CF(0) has three main subunits: a, b and c.

The protein resides in the plastid. The protein localises to the chloroplast thylakoid membrane. Produces ATP from ADP in the presence of a proton gradient across the membrane. The polypeptide is ATP synthase epsilon chain, chloroplastic (Nymphaea alba (White water-lily)).